The sequence spans 688 residues: Thyroid hormone-induced protein B (688 aa).

An N-terminal signal peptide occupies residues 1–20 (MMLSHWVLLLSLGAVWLAEG). MAM domains lie at 26–169 (GSCT…GYCI), 170–330 (ECDF…SCSG), 341–500 (AGCD…SCKI), and 509–669 (GKCT…PCND). N-linked (GlcNAc...) asparagine glycosylation is found at asparagine 32 and asparagine 135. Asparagine 358 and asparagine 668 each carry an N-linked (GlcNAc...) asparagine glycan.

The protein localises to the membrane. It is found in the secreted. It localises to the extracellular space. The chain is Thyroid hormone-induced protein B from Xenopus laevis (African clawed frog).